The chain runs to 348 residues: Bombesin receptor-activated protein C6orf89 homolog (348 aa).

Over 1-58 (MDLAANEISIYDKLSETVDLVRQTGHQCGMSEKAIEKFIRQLLEKNEPQRGPPQYPLL) the chain is Cytoplasmic. A helical transmembrane segment spans residues 59–79 (IAMYKVLLTLGLILFTAYFVI). Topologically, residues 80–348 (QPFSSLAPEP…ICDGTTLSEL (269 aa)) are extracellular.

Homodimer. Interacts with BRS3. Interacts (via N-terminus) with SIN3B. Post-translationally, glycosylated.

Its subcellular location is the golgi apparatus membrane. The protein localises to the cytoplasm. Functionally, exhibits histone deacetylase (HDAC) enhancer properties. May play a role in cell cycle progression and wound repair of bronchial epithelial cells. The sequence is that of Bombesin receptor-activated protein C6orf89 homolog from Rattus norvegicus (Rat).